We begin with the raw amino-acid sequence, 152 residues long: Arginine repressor (152 aa).

This sequence belongs to the ArgR family.

The protein resides in the cytoplasm. Its pathway is amino-acid biosynthesis; L-arginine biosynthesis [regulation]. Its function is as follows. Regulates arginine biosynthesis genes. The sequence is that of Arginine repressor from Lactococcus lactis subsp. lactis (strain IL1403) (Streptococcus lactis).